The chain runs to 257 residues: tRNA-cytidine(32) 2-sulfurtransferase (257 aa).

The PP-loop motif motif lies at serine 37–serine 42. Residues cysteine 112, cysteine 115, and cysteine 202 each contribute to the [4Fe-4S] cluster site.

The protein belongs to the TtcA family. In terms of assembly, homodimer. Mg(2+) serves as cofactor. [4Fe-4S] cluster is required as a cofactor.

It is found in the cytoplasm. It carries out the reaction cytidine(32) in tRNA + S-sulfanyl-L-cysteinyl-[cysteine desulfurase] + AH2 + ATP = 2-thiocytidine(32) in tRNA + L-cysteinyl-[cysteine desulfurase] + A + AMP + diphosphate + H(+). It participates in tRNA modification. In terms of biological role, catalyzes the ATP-dependent 2-thiolation of cytidine in position 32 of tRNA, to form 2-thiocytidine (s(2)C32). The sulfur atoms are provided by the cysteine/cysteine desulfurase (IscS) system. The chain is tRNA-cytidine(32) 2-sulfurtransferase from Geobacter sulfurreducens (strain ATCC 51573 / DSM 12127 / PCA).